The primary structure comprises 430 residues: MSSVVVVGTQWGDEGKGKITDFLSENAEVIARYQGGNNAGHTIKFNGVTYKLHLIPSGIFYKDKTCVIGNGMVVDPKALVTELAYLHERNVSTDNLRISNRAHVILPYHLKLDAVEEERKGANKIGTTKKGIGPAYMDKAARVGIRIADLLDRDVFEEKLARNLEEKNRLLEKMYDAEGFKIEDILDEYYEYGQQIKQYVCDTSVVLNDALDDGRRVLFEGAQGVMLDIDQGTYPFVTSSNPVAGGVTIGSGVGPTKIQHVVGVSKAYTTRVGDGPFPTELNNEIGDQIREVGREYGTTTGRPRRVGWFDSVVVRHARRVSGITDLSLNSIDVLTGIETLKICVAYKYRGEILEEFPASLKALAECEPVYEEMPGWTEDITGAKSLSDLPENARHYLERVSQLTGIPLSIFSVGPDRSQTNVVRSVYRPN.

GTP is bound by residues 12–18 and 40–42; these read GDEGKGK and GHT. D13 serves as the catalytic Proton acceptor. Residues D13 and G40 each contribute to the Mg(2+) site. IMP-binding positions include 13 to 16, 38 to 41, T128, R142, Q223, T238, and R302; these read DEGK and NAGH. The active-site Proton donor is H41. Residue 298–304 coordinates substrate; it reads TTTGRPR. GTP is bound by residues R304, 330–332, and 412–414; these read SID and SVG.

It belongs to the adenylosuccinate synthetase family. In terms of assembly, homodimer. Requires Mg(2+) as cofactor.

The protein resides in the cytoplasm. It catalyses the reaction IMP + L-aspartate + GTP = N(6)-(1,2-dicarboxyethyl)-AMP + GDP + phosphate + 2 H(+). It functions in the pathway purine metabolism; AMP biosynthesis via de novo pathway; AMP from IMP: step 1/2. Functionally, plays an important role in the de novo pathway of purine nucleotide biosynthesis. Catalyzes the first committed step in the biosynthesis of AMP from IMP. This Bacillus licheniformis (strain ATCC 14580 / DSM 13 / JCM 2505 / CCUG 7422 / NBRC 12200 / NCIMB 9375 / NCTC 10341 / NRRL NRS-1264 / Gibson 46) protein is Adenylosuccinate synthetase.